The primary structure comprises 116 residues: Biogenesis of lysosome-related organelles complex 1 subunit CNL1 (116 aa).

The stretch at 63–95 (DIVDVNIQSFKDILSKCEELENYFTMLDQIEMI) forms a coiled coil.

Belongs to the BLOC1S4 family. As to quaternary structure, component of the biogenesis of lysosome-related organelles complex-1 (BLOC-1).

The protein localises to the cytoplasm. Its function is as follows. Component of the biogenesis of lysosome-related organelles complex-1 (BLOC-1), a complex that is involved in endosomal cargo sorting. The polypeptide is Biogenesis of lysosome-related organelles complex 1 subunit CNL1 (CLN1) (Vanderwaltozyma polyspora (strain ATCC 22028 / DSM 70294 / BCRC 21397 / CBS 2163 / NBRC 10782 / NRRL Y-8283 / UCD 57-17) (Kluyveromyces polysporus)).